A 134-amino-acid chain; its full sequence is MKSLTWILGLWALAACFTPGESQRGPRGPYPPGPLAPPPPPCFPFGTGFVPPPHPPPYGPGRFPPPLSPPYGPGRIPPSPPPPYGPGRIQSHSLPPPYGPGYPQPPSQPRPYPPGPPFFPVNSPTDPALPTPAP.

The first 22 residues, methionine 1 to serine 22, serve as a signal peptide directing secretion. Positions proline 19–proline 134 are disordered. Pro residues-rich tracts occupy residues glycine 28–phenylalanine 43, valine 50–glycine 85, and leucine 94–phenylalanine 119.

The protein belongs to the PROL1/PROL3 family.

The protein resides in the secreted. May play a role in protection or detoxification. This chain is Submaxillary gland androgen-regulated protein 3A (SMR3A), found in Homo sapiens (Human).